The sequence spans 55 residues: Photosystem II reaction center protein K (55 aa).

The propeptide occupies 1-18 (MFNIYLENAFYLNGITFA). A helical transmembrane segment spans residues 26-46 (IFDPIVDVMPIIPLFFFLLAF).

This sequence belongs to the PsbK family. In terms of assembly, PSII is composed of 1 copy each of membrane proteins PsbA, PsbB, PsbC, PsbD, PsbE, PsbF, PsbH, PsbI, PsbJ, PsbK, PsbL, PsbM, PsbT, PsbX, PsbY, PsbZ, Psb30/Ycf12, at least 3 peripheral proteins of the oxygen-evolving complex and a large number of cofactors. It forms dimeric complexes.

Its subcellular location is the plastid. The protein localises to the chloroplast thylakoid membrane. One of the components of the core complex of photosystem II (PSII). PSII is a light-driven water:plastoquinone oxidoreductase that uses light energy to abstract electrons from H(2)O, generating O(2) and a proton gradient subsequently used for ATP formation. It consists of a core antenna complex that captures photons, and an electron transfer chain that converts photonic excitation into a charge separation. This chain is Photosystem II reaction center protein K, found in Marchantia polymorpha (Common liverwort).